Consider the following 746-residue polypeptide: WD repeat-containing and planar cell polarity effector protein fritz homolog (746 aa).

2 WD repeats span residues 326 to 374 (IQCV…TLLA) and 375 to 414 (QTEL…INIQ).

This sequence belongs to the WD repeat fritz family. In terms of assembly, component of the CPLANE (ciliogenesis and planar polarity effectors) complex, composed of INTU, FUZ and WDPCP. Interacts with CPLANE1.

The protein resides in the cell membrane. It is found in the cytoplasm. Its subcellular location is the cytoskeleton. The protein localises to the cilium axoneme. It localises to the cilium basal body. In terms of biological role, probable effector of the planar cell polarity signaling pathway which regulates the septin cytoskeleton in both ciliogenesis and collective cell movements. Together with FUZ and WDPCP proposed to function as core component of the CPLANE (ciliogenesis and planar polarity effectors) complex involved in the recruitment of peripheral IFT-A proteins to basal bodies. Binds phosphatidylinositol 3-phosphate with highest affinity, followed by phosphatidylinositol 4-phosphate and phosphatidylinositol 5-phosphate. The chain is WD repeat-containing and planar cell polarity effector protein fritz homolog (WDPCP) from Homo sapiens (Human).